The primary structure comprises 489 residues: Ataxin-10 homolog (489 aa).

It belongs to the ataxin-10 family.

Its subcellular location is the cytoplasm. May play a role in the regulation of cytokinesis. This is Ataxin-10 homolog (CTR86) from Debaryomyces hansenii (strain ATCC 36239 / CBS 767 / BCRC 21394 / JCM 1990 / NBRC 0083 / IGC 2968) (Yeast).